A 547-amino-acid chain; its full sequence is Auxin transporter-like protein 3 (547 aa).

Residues 1-74 are Cytoplasmic-facing; that stretch reads MASGSSGGGY…DAWFSCASNQ (74 aa). Residues 75–92 form a helical membrane-spanning segment; that stretch reads VAQVLLTLPYSFAQLGMA. At 93-94 the chain is on the extracellular side; sequence SG. A helical transmembrane segment spans residues 95–115; the sequence is LLFQLFYGLLGSWTAYLISIL. Over 116 to 151 the chain is Cytoplasmic; sequence YLEYRTRKERDKVDFRNHVIQWFEVLDGLLGRHWRN. A helical transmembrane segment spans residues 152–172; the sequence is VGLAFNCTFLLFGSVIQLIGC. The Extracellular portion of the chain corresponds to 173–187; it reads ASNIYYINDHLDKRT. A helical membrane pass occupies residues 188 to 208; that stretch reads WTYIFGACCATTVFIPSFHNY. At 209-211 the chain is on the cytoplasmic side; sequence RIW. Residues 212-232 form a helical membrane-spanning segment; it reads SFLGLLMTTYTAWYIAVASLI. Topologically, residues 233–247 are extracellular; the sequence is HGQVEGVAHSGPTSI. The helical transmembrane segment at 248–268 threads the bilayer; it reads VLYFTGATNILYTFGGHAVTV. Residues 269 to 281 lie on the Cytoplasmic side of the membrane; sequence EIMHAMWRPQKFK. The helical transmembrane segment at 282-302 threads the bilayer; that stretch reads AIYLLATVYVLTLTLPSASAA. Over 303–329 the chain is Extracellular; that stretch reads YWAFGDALLTHSNALALLPRTPWRDAA. Residues 330–350 traverse the membrane as a helical segment; it reads VVLMLIHQFITFGFACTPLYF. The Cytoplasmic portion of the chain corresponds to 351 to 371; the sequence is VWEKLVGLHGCPSLCKRAAAR. Residues 372–392 traverse the membrane as a helical segment; the sequence is LPVVLPIWFLAIIFPFFGPIN. Position 393 (S393) is a topological domain, extracellular. Residues 394–414 traverse the membrane as a helical segment; it reads AVGSLLVSFTVYIIPSLAYMV. Over 415–440 the chain is Cytoplasmic; it reads TFRSPQSRQNAVERPPRFAGGWTGAY. Residues 441-461 traverse the membrane as a helical segment; it reads VINSFVVAWVLVVGFGFGGWA. Residues 462-547 lie on the Extracellular side of the membrane; sequence SITNFVHQVD…HHHRHHRHGL (86 aa). A glycan (N-linked (GlcNAc...) asparagine) is linked at N509.

This sequence belongs to the amino acid/polyamine transporter 2 family. Amino acid/auxin permease (AAAP) (TC 2.A.18.1) subfamily.

The protein resides in the cell membrane. Carrier protein involved in proton-driven auxin influx. May mediate the formation of auxin gradient from developing leaves (site of auxin biosynthesis) to tips. This is Auxin transporter-like protein 3 from Oryza sativa subsp. japonica (Rice).